The following is a 228-amino-acid chain: Probable septum site-determining protein MinC (228 aa).

The protein belongs to the MinC family. In terms of assembly, interacts with MinD and FtsZ.

Functionally, cell division inhibitor that blocks the formation of polar Z ring septums. Rapidly oscillates between the poles of the cell to destabilize FtsZ filaments that have formed before they mature into polar Z rings. Prevents FtsZ polymerization. This Oceanobacillus iheyensis (strain DSM 14371 / CIP 107618 / JCM 11309 / KCTC 3954 / HTE831) protein is Probable septum site-determining protein MinC.